A 313-amino-acid polypeptide reads, in one-letter code: Jacalin-related lectin 8 (313 aa).

The first 23 residues, 1-23, serve as a signal peptide directing secretion; sequence MFIIYLFIFLSSAIIDSNGVAMA. Jacalin-type lectin domains are found at residues 24–163 and 165–309; these read QKIE…YVKT and PTKS…YFSP.

This sequence belongs to the jacalin lectin family.

The protein is Jacalin-related lectin 8 (JAL8) of Arabidopsis thaliana (Mouse-ear cress).